The sequence spans 67 residues: Small ribosomal subunit protein eS27 (67 aa).

Residues Cys22, Cys25, Cys41, and Cys44 each coordinate Zn(2+). The C4-type zinc-finger motif lies at 22–44; it reads CPDCGNEQITFSHAAMVVRCLVC.

The protein belongs to the eukaryotic ribosomal protein eS27 family. As to quaternary structure, part of the 30S ribosomal subunit. It depends on Zn(2+) as a cofactor.

The polypeptide is Small ribosomal subunit protein eS27 (Pyrobaculum aerophilum (strain ATCC 51768 / DSM 7523 / JCM 9630 / CIP 104966 / NBRC 100827 / IM2)).